A 183-amino-acid chain; its full sequence is MSQARFIAFSDGSALVNPGGPGGTGYVVLDRARPAYRFGGTRWVEDGPNAVTNNRMELRAVLEALEGLPGGEAVQVISDSRYVVDALSRWIHGWRRKGWRTASGEPVLNRDLIEALDARARDLSVTYTWVRGHDGHAVNEVVDQLAQAAARGVAGPGEAEVVAALRAEAFLAGGPPAPRSSRA.

In terms of domain architecture, RNase H type-1 spans 2–151 (SQARFIAFSD…VDQLAQAAAR (150 aa)). The Mg(2+) site is built by D11, E57, D79, and D143.

Belongs to the RNase H family. Monomer. Mg(2+) serves as cofactor.

The protein resides in the cytoplasm. It catalyses the reaction Endonucleolytic cleavage to 5'-phosphomonoester.. Functionally, endonuclease that specifically degrades the RNA of RNA-DNA hybrids. The protein is Ribonuclease H of Anaeromyxobacter dehalogenans (strain 2CP-C).